Consider the following 191-residue polypeptide: uncharacterized protein (191 aa).

Positions 52–112 are disordered; sequence NKQENQTESS…TNKDTNIETN (61 aa). A compositionally biased stretch (polar residues) spans 57 to 70; sequence QTESSDLNNTDSLV. Over residues 71 to 94 the composition is skewed to low complexity; that stretch reads DSNSDNQTNTTDTSTNNVENLNEN. Residues 138–172 are a coiled coil; it reads QDKISDTERIRFLEEKVSKLERKIRTLSLQMTKIS.

This is an uncharacterized protein from Acanthamoeba polyphaga mimivirus (APMV).